The chain runs to 323 residues: Breast cancer metastasis-suppressor 1-like protein-A (323 aa).

The span at 1-15 (MPVHSREKKESNHEE) shows a compositional bias: basic and acidic residues. A disordered region spans residues 1-52 (MPVHSREKKESNHEEMEVDFAEQEGSSSEDEDTESSSVSEDGESSEMDDEDC). Over residues 16–51 (MEVDFAEQEGSSSEDEDTESSSVSEDGESSEMDDED) the composition is skewed to acidic residues. Coiled coils occupy residues 50 to 81 (EDCE…YKER) and 156 to 178 (QTEL…ITSE).

The protein belongs to the BRMS1 family.

The protein localises to the nucleus. In terms of biological role, involved in the histone deacetylase (HDAC1)-dependent transcriptional repression activity. The protein is Breast cancer metastasis-suppressor 1-like protein-A (brms1la) of Danio rerio (Zebrafish).